A 224-amino-acid chain; its full sequence is Putative ankyrin repeat protein R845 (224 aa).

ANK repeat units follow at residues 1–14 (MVEY…DVRS), 15–44 (NYDH…DVSM), 46–74 (YDYI…DPRT), 75–104 (NNDK…DIRI), 105–134 (DNDS…DIRA), 136–164 (NDYS…DVRA), 165–194 (DNDY…DFRA), and 196–224 (NDCA…VCPY).

This Acanthamoeba polyphaga mimivirus (APMV) protein is Putative ankyrin repeat protein R845.